The primary structure comprises 340 residues: MKKKLLVLTMSTLFATQLINSNHANASVTESVDKKFVVPESGINKIIPTYNEFKKAPKVNVSNLTDNKNFVASEDKLKKISDPSAASKIVDKNFVVPESKLGNIVPEYKEINNRVNVATNNPASQQVDKHFVAKGPEVNRFITQNKVNHHFITTQTHYKKVITSYKSTHVHKHVNHATDSINKHFIVKPSEAPRYTHPSQSLMINHYFAVPGYHAHKFVTPGHASIKINHFCVVPQINSFKVIPPYGHNSHRMHVPSFQNNTTATHQNAKVNKAYDYKYFYSYKVVKGVKKYFSFSQSNGYKIGKPSLNIKNVNYQYAVPSYSPTNYVPEFKGSLPAPRV.

The first 26 residues, 1–26 (MKKKLLVLTMSTLFATQLINSNHANA), serve as a signal peptide directing secretion.

The protein localises to the cell surface. Its function is as follows. Adhesin that binds to the host cell extracellular matrix proteins fibronectin, fibrinogen, collagen, and vitronectin. The polypeptide is Extracellular matrix protein-binding protein emp (emp) (Staphylococcus aureus).